The following is a 143-amino-acid chain: MSHDSDDKTFPYEKDDAELRRRLTPMQYEVTQHAATERAFTGEYTDTEDDGIYKCVVCSTPLFESGSKFHSGCGWPSYFKPLNGEVIDEKVDYSHGMVRVEVRCNHCGAHLGHVFEDGPRDQTGLRYCINSAALNFESRPENE.

The 124-residue stretch at 16–139 (DAELRRRLTP…NSAALNFESR (124 aa)) folds into the MsrB domain. Positions 55, 58, 104, and 107 each coordinate Zn(2+). The active-site Nucleophile is the Cys128.

The protein belongs to the MsrB Met sulfoxide reductase family. It depends on Zn(2+) as a cofactor.

The enzyme catalyses L-methionyl-[protein] + [thioredoxin]-disulfide + H2O = L-methionyl-(R)-S-oxide-[protein] + [thioredoxin]-dithiol. This chain is Peptide methionine sulfoxide reductase MsrB, found in Burkholderia lata (strain ATCC 17760 / DSM 23089 / LMG 22485 / NCIMB 9086 / R18194 / 383).